An 809-amino-acid chain; its full sequence is Phenylalanine--tRNA ligase beta subunit (809 aa).

The tRNA-binding domain occupies 39-152 (KDKWPNVYVG…ADALVGMLAS (114 aa)). The region spanning 404 to 492 (KERNGIVLSL…RIAGYHTIPC (89 aa)) is the B5 domain. Residues aspartate 470, aspartate 476, glutamate 479, and glutamate 480 each contribute to the Mg(2+) site. The 92-residue stretch at 717–808 (NRFPAVERDL…LNTETGAVLR (92 aa)) folds into the FDX-ACB domain.

It belongs to the phenylalanyl-tRNA synthetase beta subunit family. Type 1 subfamily. Tetramer of two alpha and two beta subunits. The cofactor is Mg(2+).

It is found in the cytoplasm. The enzyme catalyses tRNA(Phe) + L-phenylalanine + ATP = L-phenylalanyl-tRNA(Phe) + AMP + diphosphate + H(+). The protein is Phenylalanine--tRNA ligase beta subunit of Dehalococcoides mccartyi (strain CBDB1).